A 475-amino-acid chain; its full sequence is Putative aldehyde dehydrogenase SSP0762 (475 aa).

201–207 (GDGQGVG) contacts NAD(+). Catalysis depends on residues E245 and C279.

The protein belongs to the aldehyde dehydrogenase family.

The catalysed reaction is an aldehyde + NAD(+) + H2O = a carboxylate + NADH + 2 H(+). This chain is Putative aldehyde dehydrogenase SSP0762, found in Staphylococcus saprophyticus subsp. saprophyticus (strain ATCC 15305 / DSM 20229 / NCIMB 8711 / NCTC 7292 / S-41).